A 218-amino-acid chain; its full sequence is Non-structural protein NP-1 (218 aa).

Disordered regions lie at residues 1–89 and 195–218; these read MSSG…RTNP and TESE…DASN. 2 stretches are compositionally biased toward basic residues: residues 8 to 18 and 27 to 40; these read DKHRAYKRKGS and PWQP…RSPI. Over residues 58-67 the composition is skewed to polar residues; it reads SHLSSCTASK. A compositionally biased stretch (basic and acidic residues) spans 73 to 86; sequence TKTKENTSGKRDSR. Over residues 196–205 the composition is skewed to acidic residues; that stretch reads ESEEITDEEM.

This sequence belongs to the Bocaparvovirus Non-structural protein NP-1 family.

Its subcellular location is the host nucleus. Its function is as follows. Required for the expression of the capsid proteins. Performs the splicing and internal polyadenylation of the viral capsid-encoding mRNA precursor, which allows its maturation and expression. Transactivates the viral promoter. The chain is Non-structural protein NP-1 (NP1) from Human bocavirus 3 (HBoV3).